The following is a 193-amino-acid chain: Putative 3-methyladenine DNA glycosylase (193 aa).

This sequence belongs to the DNA glycosylase MPG family.

This Francisella tularensis subsp. tularensis (strain FSC 198) protein is Putative 3-methyladenine DNA glycosylase.